A 116-amino-acid chain; its full sequence is Large ribosomal subunit protein uL22 (116 aa).

This sequence belongs to the universal ribosomal protein uL22 family. As to quaternary structure, part of the 50S ribosomal subunit.

Its function is as follows. This protein binds specifically to 23S rRNA; its binding is stimulated by other ribosomal proteins, e.g. L4, L17, and L20. It is important during the early stages of 50S assembly. It makes multiple contacts with different domains of the 23S rRNA in the assembled 50S subunit and ribosome. The globular domain of the protein is located near the polypeptide exit tunnel on the outside of the subunit, while an extended beta-hairpin is found that lines the wall of the exit tunnel in the center of the 70S ribosome. This chain is Large ribosomal subunit protein uL22, found in Wolbachia pipientis subsp. Culex pipiens (strain wPip).